Consider the following 174-residue polypeptide: MASLTRAVTRLAIAGRQAVRTIATTTPVSGHGDDIMEKWPADKFDNHFINYLNRPEIDGWEVRKALSELHDYDVIPDPKVVEAALRACRRVNDFALAVRFLEAIKIKCGAQKNRDTVYAYIVKQVEPVLKELGIDTPEQLGYGEPEFFVPEPEYWWEKKWYKDYGYDKHPNIQI.

Residues 1–29 constitute a mitochondrion transit peptide; sequence MASLTRAVTRLAIAGRQAVRTIATTTPVS.

It belongs to the cytochrome c oxidase subunit 5A family. Component of the cytochrome c oxidase (complex IV, CIV), a multisubunit enzyme composed of a catalytic core of 3 subunits and several supernumerary subunits. The complex exists as a monomer or a dimer and forms supercomplexes (SCs) in the inner mitochondrial membrane with ubiquinol-cytochrome c oxidoreductase (cytochrome b-c1 complex, complex III, CIII).

It localises to the mitochondrion inner membrane. It participates in energy metabolism; oxidative phosphorylation. Functionally, component of the cytochrome c oxidase, the last enzyme in the mitochondrial electron transport chain which drives oxidative phosphorylation. The respiratory chain contains 3 multisubunit complexes succinate dehydrogenase (complex II, CII), ubiquinol-cytochrome c oxidoreductase (cytochrome b-c1 complex, complex III, CIII) and cytochrome c oxidase (complex IV, CIV), that cooperate to transfer electrons derived from NADH and succinate to molecular oxygen, creating an electrochemical gradient over the inner membrane that drives transmembrane transport and the ATP synthase. Cytochrome c oxidase is the component of the respiratory chain that catalyzes the reduction of oxygen to water. Electrons originating from reduced cytochrome c in the intermembrane space (IMS) are transferred via the dinuclear copper A center (CU(A)) of subunit 2 and heme A of subunit 1 to the active site in subunit 1, a binuclear center (BNC) formed by heme A3 and copper B (CU(B)). The BNC reduces molecular oxygen to 2 water molecules using 4 electrons from cytochrome c in the IMS and 4 protons from the mitochondrial matrix. This chain is Cytochrome c oxidase subunit 5A, mitochondrial, found in Caenorhabditis elegans.